The sequence spans 452 residues: Probable cysteine protease RD21C (452 aa).

The N-terminal stretch at Met-1–Ala-29 is a signal peptide. A propeptide spans Thr-30–Ser-128 (activation peptide). N-linked (GlcNAc...) asparagine glycosylation is present at Asn-82. 5 disulfides stabilise this stretch: Cys-150-Cys-192, Cys-184-Cys-226, Cys-284-Cys-335, Cys-363-Cys-375, and Cys-369-Cys-390. Cys-153 is an active-site residue. Catalysis depends on residues His-290 and Asn-310. Positions Lys-346–Ala-452 are cleaved as a propeptide — removed in mature form.

Belongs to the peptidase C1 family. Interacts with WSCP.

Functionally, probable thiol protease. This is Probable cysteine protease RD21C from Arabidopsis thaliana (Mouse-ear cress).